A 339-amino-acid chain; its full sequence is uncharacterized protein (339 aa).

Residues 1–12 (MDIDLNNQTDNN) are compositionally biased toward polar residues. Residues 1–30 (MDIDLNNQTDNNELIVEDTENPKNPNSTNI) are disordered.

This is an uncharacterized protein from Acanthamoeba polyphaga (Amoeba).